The primary structure comprises 1039 residues: uncharacterized protein (1039 aa).

The N-terminal stretch at 1-28 (MKLFPRTLLKILVVSFILNFGVTSKSYA) is a signal peptide. Transmembrane regions (helical) follow at residues 326–346 (IVTAFLTLYVMLFGAKILLAG), 354–374 (YINFILKIIFVTYFSIGLNIT), 387–407 (MIQWAFPFLLNGINGLASWVM), 491–511 (MLVSLALAYPLLVISVAAFMV), 517–537 (CMVSIVILGILAPLFVPMFLF), and 551–571 (MISFLLQPMVVVTFMITMFSV). The segment at 654-680 (KPNQTCDPKAADADTKCNPKPGDSSTS) is disordered. A helical membrane pass occupies residues 710-730 (IKDILLALVTACFTLYLMYNF). Disordered regions lie at residues 799–875 (LVKG…PTTV), 917–949 (IKEAVPESQKEEPKEPRVKHTTEVEPELNLDEN), and 1004–1039 (LYRSVGGRAKDKATERNDGTIENRSKKIDSGSDENP). The segment covering 802–811 (GSGGGGGSEG) has biased composition (gly residues). The span at 812–836 (GDSFTSGGLRETSSTAATPSSALSS) shows a compositional bias: low complexity. Over residues 843 to 861 (GTATPSSASEEMLDTSFSN) the composition is skewed to polar residues. 2 stretches are compositionally biased toward basic and acidic residues: residues 917 to 939 (IKEAVPESQKEEPKEPRVKHTTE) and 1004 to 1033 (LYRSVGGRAKDKATERNDGTIENRSKKIDS).

The protein belongs to the TrbL/VirB6 family.

The protein localises to the cell membrane. This is an uncharacterized protein from Rickettsia bellii (strain RML369-C).